The sequence spans 895 residues: Collagen alpha-1(I) chain (895 aa).

The interval 1–895 (GPMGPSGPRG…PGPIGPPGPR (895 aa)) is disordered. The span at 20–39 (PQGFQGPPGEPGEPGASGPM) shows a compositional bias: low complexity. Residues 51–65 (NGDDGEAGKPGRPGE) show a composition bias toward basic and acidic residues. At Ser90 the chain carries Phosphoserine. Composition is skewed to low complexity over residues 98–114 (DAGP…PGEN) and 137–150 (PAGA…TGAA). The span at 152-164 (PPGPTGPAGPPGF) shows a compositional bias: pro residues. Composition is skewed to low complexity over residues 198 to 237 (AGAA…RGPS), 302 to 336 (ERGF…PGEA), 348 to 374 (KGIT…QDGR), 383 to 399 (ARGQ…KGAA), 553 to 564 (TGPSGPAGPTGA), and 575 to 593 (AGFA…KGDA). Ser556 is modified (phosphoserine). Residues 595–607 (PPGPAGPAGPPGP) show a composition bias toward pro residues. 3 stretches are compositionally biased toward low complexity: residues 608-635 (IGSV…AGRV), 660-669 (ETGPAGRPGE), and 679-703 (AGEK…QGIA). Residues 741–751 (PPGPVGPPGIA) are compositionally biased toward pro residues. Residues 753–768 (PPGESGREGSPGAEGS) are compositionally biased toward low complexity. Over residues 787 to 802 (AGPPGAPGAPGAPGPV) the composition is skewed to pro residues. 2 stretches are compositionally biased toward low complexity: residues 823–838 (IGPV…QGPR) and 853–886 (PGEQ…NGIP).

Belongs to the fibrillar collagen family. In terms of assembly, trimers of one alpha 2(I) and two alpha 1(I) chains. In terms of processing, prolines at the third position of the tripeptide repeating unit (G-X-Y) are hydroxylated in some or all of the chains. Forms the fibrils of tendon, ligaments and bones. In bones, the fibrils are mineralized with calcium hydroxyapatite.

Its subcellular location is the secreted. The protein resides in the extracellular space. It localises to the extracellular matrix. Functionally, type I collagen is a member of group I collagen (fibrillar forming collagen). This Equus sp protein is Collagen alpha-1(I) chain.